A 138-amino-acid chain; its full sequence is ATP synthase epsilon chain (138 aa).

Belongs to the ATPase epsilon chain family. As to quaternary structure, F-type ATPases have 2 components, CF(1) - the catalytic core - and CF(0) - the membrane proton channel. CF(1) has five subunits: alpha(3), beta(3), gamma(1), delta(1), epsilon(1). CF(0) has three main subunits: a, b and c.

It is found in the cell inner membrane. Produces ATP from ADP in the presence of a proton gradient across the membrane. The sequence is that of ATP synthase epsilon chain from Psychrobacter cryohalolentis (strain ATCC BAA-1226 / DSM 17306 / VKM B-2378 / K5).